Consider the following 184-residue polypeptide: Photosystem I assembly protein Ycf4 (184 aa).

Helical transmembrane passes span 22-42 (FCWA…GTSS) and 57-77 (ILFF…LFIS).

Belongs to the Ycf4 family.

Its subcellular location is the plastid. It is found in the chloroplast thylakoid membrane. Seems to be required for the assembly of the photosystem I complex. The polypeptide is Photosystem I assembly protein Ycf4 (Phalaenopsis aphrodite subsp. formosana (Moth orchid)).